The chain runs to 393 residues: Cell division protein FtsZ 2 (393 aa).

The tract at residues 1–28 is disordered; sequence MQDIVQDALDNAEAEQREMDGDGDGDEF. GTP contacts are provided by residues 40–44, 127–129, Glu158, Arg161, and Asp204; these read GAGNN and GTG. The interval 339–393 is disordered; sequence GPSTQKQADKSRRELQDVDSKQRAADDAGAGGFGGAHSDGGQDEVEQENGLDVIR. The span at 345-364 shows a compositional bias: basic and acidic residues; that stretch reads QADKSRRELQDVDSKQRAAD. The segment covering 367–376 has biased composition (gly residues); it reads GAGGFGGAHS.

This sequence belongs to the FtsZ family. As to quaternary structure, homodimer. Polymerizes to form a dynamic ring structure in a strictly GTP-dependent manner. Interacts directly with several other division proteins.

The protein localises to the cytoplasm. In terms of biological role, essential cell division protein that forms a contractile ring structure (Z ring) at the future cell division site. The regulation of the ring assembly controls the timing and the location of cell division. One of the functions of the FtsZ ring is to recruit other cell division proteins to the septum to produce a new cell wall between the dividing cells. Binds GTP and shows GTPase activity. Overexpression causes significant changes in cell morphology. The polypeptide is Cell division protein FtsZ 2 (Halobacterium salinarum (strain ATCC 29341 / DSM 671 / R1)).